The primary structure comprises 730 residues: Guanyl-specific ribonuclease pgl-1 (730 aa).

The involved in dimerization stretch occupies residues 205–447 (KQLMLDGPKS…VTRIVESLEK (243 aa)). His437 serves as the catalytic Proton acceptor. 2 stretches are compositionally biased toward polar residues: residues 452-472 (DTPS…QDSA) and 568-595 (DANQ…SPTK). Disordered regions lie at residues 452–475 (DTPS…AYTK), 567–639 (SDAN…TPMP), and 686–730 (GGRG…RGGF). Residues 674 to 730 (GGGRGGYGGGDRGGRGGYGGDRGGRGGYGGGDRGGRGGYGGDRGRGGYGGRGGRGGF) are RNA-binding RGG-box.

In terms of assembly, homodimer. Interacts with pgl-2 and pgl-3; this association is not required for P-granule localization of either pgl-2 or pgl-3. Interacts with ife-1. Interacts with prmt-1; the interaction is direct. Interacts with nmad-1. Interacts with P granule components meg-1, meg-3 and meg-4. It depends on Does not require metal ions for catalytic activity. as a cofactor. In terms of processing, methylated at arginine residues in the RNA-binding RGG-box by prmt-1. Methylation promotes P-granule degradation by autophagy. As to expression, expressed in the germline. Expressed in most somatic cells.

It is found in the cytoplasmic granule. It carries out the reaction [RNA] containing guanosine + H2O = an [RNA fragment]-3'-guanosine-3'-phosphate + a 5'-hydroxy-ribonucleotide-3'-[RNA fragment].. Its activity is regulated as follows. Not inhibited by RNase inhibitor RNasin. In terms of biological role, guanyl-specific endoribonuclease which cleaves the phosphodiester bond in single-stranded RNA between the 3'-guanylic residue and the 5'-OH residue of adjacent nucleotide, resulting in the formation of a corresponding 2',3'-cyclic phosphate intermediate. Together with the P-granule component pgl-3, is involved in the formation of P-granules. Together with pgl-3, probably recruits other granule components such as pos-1, mex-3 and glh-1 to P-granules. In addition, may act redundantly with pgl-3 to protect germ cells from excessive germline apoptosis during normal oogenesis and development of the two gonadal arms. This may in part be through regulating the localization of sir-2.1 which is involved in germ cell apoptosis. May protect somatic cells from excessive apoptosis during normal development. Essential role in male and female postembryonic germline development; maternally provided protein maintains a population of proliferating germ cells and zygotic expression is required for correct oogenesis. The chain is Guanyl-specific ribonuclease pgl-1 from Caenorhabditis elegans.